The sequence spans 162 residues: Interleukin-15 (162 aa).

An N-terminal signal peptide occupies residues 1-29; sequence MRISKPHLRITSIQCYVCLLLNTHFLTEA. The propeptide occupies 30–48; sequence GIRVFILGCISAGIPKTEA. Cystine bridges form between cysteine 83-cysteine 133 and cysteine 90-cysteine 136. N-linked (GlcNAc...) asparagine glycans are attached at residues asparagine 119, asparagine 127, and asparagine 143.

The protein belongs to the IL-15/IL-21 family.

The protein resides in the secreted. Its function is as follows. Cytokine that plays a major role in the development of inflammatory and protective immune responses to microbial invaders and parasites by modulating immune cells of both the innate and adaptive immune systems. Stimulates the proliferation of natural killer cells, T-cells and B-cells and promotes the secretion of several cytokines. In monocytes, induces the production of IL8 and monocyte chemotactic protein 1/CCL2, two chemokines that attract neutrophils and monocytes respectively to sites of infection. Unlike most cytokines, which are secreted in soluble form, IL15 is expressed in association with its high affinity IL15RA on the surface of IL15-producing cells and delivers signals to target cells that express IL2RB and IL2RG receptor subunits. Binding to its receptor triggers the phosphorylation of JAK1 and JAK3 and the recruitment and subsequent phosphorylation of signal transducer and activator of transcription-3/STAT3 and STAT5. In mast cells, induces the rapid tyrosine phosphorylation of STAT6 and thereby controls mast cell survival and release of cytokines such as IL4. In Marmota monax (Woodchuck), this protein is Interleukin-15 (IL15).